The sequence spans 58 residues: Metallothionein-1 (58 aa).

The beta stretch occupies residues 1–28 (PGPCCNDKCVCKEGGCKEGCQCTSCRCS). The a divalent metal cation site is built by Cys4, Cys5, Cys9, Cys11, Cys16, Cys20, Cys22, Cys25, Cys27, Cys30, Cys33, Cys37, Cys39, Cys45, Cys49, Cys53, Cys55, and Cys56. Residues 29–58 (PCEKCSSGCKCANKEECSKTCSKACSCCPT) are alpha.

Belongs to the metallothionein superfamily. Type 3 family.

Metallothioneins have a high content of cysteine residues that bind various heavy metals. Class I MTS in marine crustacea are involved in the sequestration of elevated levels of heavy-metal ions. The polypeptide is Metallothionein-1 (Scylla serrata (Mud crab)).